The chain runs to 235 residues: Large ribosomal subunit protein uL3 (235 aa).

Residue Q151 is modified to N5-methylglutamine.

Belongs to the universal ribosomal protein uL3 family. As to quaternary structure, part of the 50S ribosomal subunit. Forms a cluster with proteins L14 and L19. Methylated by PrmB.

In terms of biological role, one of the primary rRNA binding proteins, it binds directly near the 3'-end of the 23S rRNA, where it nucleates assembly of the 50S subunit. The sequence is that of Large ribosomal subunit protein uL3 from Rhodospirillum rubrum (strain ATCC 11170 / ATH 1.1.1 / DSM 467 / LMG 4362 / NCIMB 8255 / S1).